The sequence spans 537 residues: Exodeoxyribonuclease 7 large subunit (537 aa).

The interval 508 to 537 (GEGAPVEPPQAARPSKGARTKAAQPSLFDD) is disordered.

It belongs to the XseA family. Heterooligomer composed of large and small subunits.

It is found in the cytoplasm. It carries out the reaction Exonucleolytic cleavage in either 5'- to 3'- or 3'- to 5'-direction to yield nucleoside 5'-phosphates.. Its function is as follows. Bidirectionally degrades single-stranded DNA into large acid-insoluble oligonucleotides, which are then degraded further into small acid-soluble oligonucleotides. The sequence is that of Exodeoxyribonuclease 7 large subunit from Azorhizobium caulinodans (strain ATCC 43989 / DSM 5975 / JCM 20966 / LMG 6465 / NBRC 14845 / NCIMB 13405 / ORS 571).